The sequence spans 327 residues: Pyruvate dehydrogenase E1 component subunit beta (327 aa).

Residue E60 coordinates thiamine diphosphate.

Heterodimer of an alpha and a beta chain. It depends on thiamine diphosphate as a cofactor.

It carries out the reaction N(6)-[(R)-lipoyl]-L-lysyl-[protein] + pyruvate + H(+) = N(6)-[(R)-S(8)-acetyldihydrolipoyl]-L-lysyl-[protein] + CO2. In terms of biological role, the pyruvate dehydrogenase complex catalyzes the overall conversion of pyruvate to acetyl-CoA and CO(2). It contains multiple copies of three enzymatic components: pyruvate dehydrogenase (E1), dihydrolipoamide acetyltransferase (E2) and lipoamide dehydrogenase (E3). The chain is Pyruvate dehydrogenase E1 component subunit beta (pdhB) from Acholeplasma laidlawii.